A 1049-amino-acid polypeptide reads, in one-letter code: Self-sufficient cytochrome P450 monooxygenase CYP505E4 (1049 aa).

Heme is bound at residue cysteine 405. Polar residues predominate over residues 461-470 (SATALSQHNM). Residues 461-491 (SATALSQHNMSAGATASPGSSTHLAGDENGQ) are disordered. Positions 471–482 (SAGATASPGSST) are enriched in low complexity. Positions 499–640 (ISFFYGSNSG…DLEVWEETNL (142 aa)) constitute a Flavodoxin-like domain. FMN-binding positions include 505 to 509 (SNSGT) and 584 to 616 (VFGC…TRLT). Residues 678 to 906 (RDLVEGKVTA…RPAKDAFHLP (229 aa)) form the FAD-binding FR-type domain.

It in the N-terminal section; belongs to the cytochrome P450 family. FAD serves as cofactor. The cofactor is FMN. Requires heme as cofactor.

It carries out the reaction 2 oxidized [cytochrome P450] + NADPH = 2 reduced [cytochrome P450] + NADP(+) + H(+). It catalyses the reaction an organic molecule + reduced [NADPH--hemoprotein reductase] + O2 = an alcohol + oxidized [NADPH--hemoprotein reductase] + H2O + H(+). The catalysed reaction is dodecanoate + reduced [NADPH--hemoprotein reductase] + O2 = 5-hydroxydodecanoate + oxidized [NADPH--hemoprotein reductase] + H2O + H(+). The enzyme catalyses dodecan-1-ol + reduced [NADPH--hemoprotein reductase] + O2 = 1,5-dodecanediol + oxidized [NADPH--hemoprotein reductase] + H2O + H(+). It carries out the reaction dodecanoate + reduced [NADPH--hemoprotein reductase] + O2 = 9-hydroxydodecanoate + oxidized [NADPH--hemoprotein reductase] + H2O + H(+). It catalyses the reaction dodecan-1-ol + reduced [NADPH--hemoprotein reductase] + O2 = 1,4-dodecanediol + oxidized [NADPH--hemoprotein reductase] + H2O + H(+). The catalysed reaction is dodecan-1-ol + reduced [NADPH--hemoprotein reductase] + O2 = 1,6-dodecanediol + oxidized [NADPH--hemoprotein reductase] + H2O + H(+). In terms of biological role, self-sufficient cytochrome P450 monooxygenase that catalyzes the regioselective in-chain hydroxylation of alkanes, fatty alcohols, and fatty acids at the omega-7 position. Performs hydroxylation of C10-C16 n-alkanes and C12 and C14 fatty alcohols; and thereby enables the one step biocatalytic synthesis of rare alcohols such as 5-dodecanol and 7-tetradecanol. Converts 1-dodecanol into 1,5-dodecanediol as major product with very little sub-terminally hydroxylated products with the 1,4-dodecanediol and 1,6-dodecanediol more abundant. Converts dodecanoic acid to 5-hydroxydodecanoic acid which can be further converted into delta-dodecalactone by lactonization of the 5-hydroxy acid at low pH. Also gives sub-terminal hydroxylation of dodecanoic acid with 9-hydroxydodecanoic acid being the second most abundant product. Does not show any significant activity toward tetradecanoic acid. The polypeptide is Self-sufficient cytochrome P450 monooxygenase CYP505E4 (Penicillium camemberti (strain FM 013)).